The following is a 146-amino-acid chain: Leghemoglobin 49 (146 aa).

The 145-residue stretch at 2-146 folds into the Globin domain; the sequence is GFTQQQEALV…LATAIKKAMS (145 aa). Residues Tyr-24 and Tyr-29 each carry the nitrated tyrosine modification. Ser-44 is a heme b binding site. A Phosphoserine modification is found at Ser-44. His-61 lines the O2 pocket. His-93 and Lys-96 together coordinate heme b. Tyr-134 is modified (nitrated tyrosine).

This sequence belongs to the plant globin family. In terms of assembly, monomer. In terms of processing, nitrated in effective nodules and particularly in hypoxic conditions; this mechanism may play a protective role in the symbiosis by buffering toxic peroxynitrite NO(2)(-). Nitration level decrease during nodule senescence. Post-translationally, phosphorylation at Ser-44 disrupts the molecular environment of its porphyrin ring oxygen binding pocket, thus leading to a reduced oxygen consumption and to the delivery of oxygen O(2) to symbiosomes. As to expression, accumulates in root nodules after inoculation by bacteria of the genus Rhizobium.

Its subcellular location is the cytoplasm. The protein resides in the cytosol. The protein localises to the nucleus. Leghemoglobin that reversibly binds oxygen O(2) through a pentacoordinated heme iron. In root nodules, facilitates the diffusion of oxygen to the bacteroids while preventing the bacterial nitrogenase from being inactivated by buffering dioxygen, nitric oxide and carbon monoxide, and promoting the formation of reactive oxygen species (ROS, e.g. H(2)O(2)). This role is essential for symbiotic nitrogen fixation (SNF). This Vicia faba (Broad bean) protein is Leghemoglobin 49.